A 268-amino-acid chain; its full sequence is uncharacterized protein (268 aa).

An RING-type; degenerate zinc finger spans residues 21–61 (CVICLQKDGLRAQLSPCGHDQFDYSCICRWMDQSLTCPICK).

It is found in the mitochondrion. The protein resides in the nucleus. This is an uncharacterized protein from Schizosaccharomyces pombe (strain 972 / ATCC 24843) (Fission yeast).